Here is a 413-residue protein sequence, read N- to C-terminus: Adenylosuccinate synthetase (413 aa).

GTP contacts are provided by residues 11 to 17 and 39 to 41; these read GDEGKGK and GHT. Aspartate 12 functions as the Proton acceptor in the catalytic mechanism. 2 residues coordinate Mg(2+): aspartate 12 and glycine 39. IMP-binding positions include 12-15, 37-40, threonine 125, arginine 139, glutamine 217, threonine 232, and arginine 296; these read DEGK and NAGH. The active-site Proton donor is histidine 40. Substrate is bound at residue 292-298; sequence TTTGRPR. GTP is bound by residues arginine 298, 324-326, and 402-404; these read KLD and STG.

This sequence belongs to the adenylosuccinate synthetase family. In terms of assembly, homodimer. Mg(2+) serves as cofactor.

It localises to the cytoplasm. The catalysed reaction is IMP + L-aspartate + GTP = N(6)-(1,2-dicarboxyethyl)-AMP + GDP + phosphate + 2 H(+). Its pathway is purine metabolism; AMP biosynthesis via de novo pathway; AMP from IMP: step 1/2. Plays an important role in the de novo pathway of purine nucleotide biosynthesis. Catalyzes the first committed step in the biosynthesis of AMP from IMP. In Nautilia profundicola (strain ATCC BAA-1463 / DSM 18972 / AmH), this protein is Adenylosuccinate synthetase.